Reading from the N-terminus, the 1072-residue chain is DNA-directed RNA polymerase subunit beta (1072 aa).

The protein belongs to the RNA polymerase beta chain family. As to quaternary structure, in plastids the minimal PEP RNA polymerase catalytic core is composed of four subunits: alpha, beta, beta', and beta''. When a (nuclear-encoded) sigma factor is associated with the core the holoenzyme is formed, which can initiate transcription.

The protein localises to the plastid. It localises to the chloroplast. The enzyme catalyses RNA(n) + a ribonucleoside 5'-triphosphate = RNA(n+1) + diphosphate. Functionally, DNA-dependent RNA polymerase catalyzes the transcription of DNA into RNA using the four ribonucleoside triphosphates as substrates. This is DNA-directed RNA polymerase subunit beta from Olimarabidopsis pumila (Dwarf rocket).